The chain runs to 200 residues: Cell division protein SepF (200 aa).

2 disordered regions span residues 35–60 and 170–200; these read NLYQ…RWRE and LHEV…RMAQ. Polar residues predominate over residues 183–200; it reads PTGSPNQTWGNETNRMAQ.

This sequence belongs to the SepF family. Homodimer. Interacts with FtsZ.

Its subcellular location is the cytoplasm. Cell division protein that is part of the divisome complex and is recruited early to the Z-ring. Probably stimulates Z-ring formation, perhaps through the cross-linking of FtsZ protofilaments. Its function overlaps with FtsA. The protein is Cell division protein SepF of Nostoc punctiforme (strain ATCC 29133 / PCC 73102).